Reading from the N-terminus, the 310-residue chain is MSENRIRIATRKSPLAMWQAEFVKAELERVHPGIVVELLPMSTKGDVILDTPLAKVGGKGLFVKELEVAMLEDQADIAVHSMKDVPVDFPEGLGLEVICEREDPRDAFVSNLYKSISELPLGATVGTSSLRRQCQLRASRPDLIIKDLRGNVGTRLAKLDNGEYDAIILAAAGLIRLKLSERIASFISAEESLPANGQGAVGIECRTNDERVKALLAPLEHLETRYRVIAERAMNTRLEGGCQVPIGAFAEIHGDEMTLRGLVGNPDGSEIIEGVITGPKTEATKLGVALAEELLSKGAKSILDAVYAKA.

Cysteine 242 is subject to S-(dipyrrolylmethanemethyl)cysteine.

Belongs to the HMBS family. As to quaternary structure, monomer. Dipyrromethane is required as a cofactor.

The enzyme catalyses 4 porphobilinogen + H2O = hydroxymethylbilane + 4 NH4(+). It functions in the pathway porphyrin-containing compound metabolism; protoporphyrin-IX biosynthesis; coproporphyrinogen-III from 5-aminolevulinate: step 2/4. In terms of biological role, tetrapolymerization of the monopyrrole PBG into the hydroxymethylbilane pre-uroporphyrinogen in several discrete steps. This chain is Porphobilinogen deaminase, found in Shewanella sp. (strain ANA-3).